We begin with the raw amino-acid sequence, 1286 residues long: MDNDGGAPPPPPTLVVEEPKKAEIRGVAFKELFRFADGLDYVLMGIGSVGAFVHGCSLPLFLRFFADLVNSFGSNSNNVEKMMEEVLKYALYFLVVGAAIWASSWAEISCWMWSGERQTTKMRIKYLEAALNQDIQFFDTEVRTSDVVFAINTDAVMVQDAISEKLGNFIHYMATFVSGFIVGFTAVWQLALVTLAVVPLIAVIGGIHTTTLSKLSNKSQESLSQAGNIVEQTVVQIRVVMAFVGESRASQAYSSALKIAQKLGYKTGLAKGMGLGATYFVVFCCYALLLWYGGYLVRHHLTNGGLAIATMFAVMIGGLALGQSAPSMAAFAKAKVAAAKIFRIIDHKPTIERNSESGVELDSVTGLVELKNVDFSYPSRPDVKILNNFCLSVPAGKTIALVGSSGSGKSTVVSLIERFYDPNSGQVLLDGQDLKTLKLRWLRQQIGLVSQEPALFATSIKENILLGRPDADQVEIEEAARVANAHSFIIKLPDGFDTQVGERGLQLSGGQKQRIAIARAMLKNPAILLLDEATSALDSESEKLVQEALDRFMIGRTTLIIAHRLSTIRKADLVAVLQQGSVSEIGTHDELFSKGENGVYAKLIKMQEAAHETAMSNARKSSARPSSARNSVSSPIMTRNSSYGRSPYSRRLSDFSTSDFSLSIDASSYPNYRNEKLAFKDQANSFWRLAKMNSPEWKYALLGSVGSVICGSLSAFFAYVLSAVLSVYYNPDHEYMIKQIDKYCYLLIGLSSAALVFNTLQHSFWDIVGENLTKRVREKMLSAVLKNEMAWFDQEENESARIAARLALDANNVRSAIGDRISVIVQNTALMLVACTAGFVLQWRLALVLVAVFPVVVAATVLQKMFMTGFSGDLEAAHAKGTQLAGEAIANVRTVAAFNSEAKIVRLYTANLEPPLKRCFWKGQIAGSGYGVAQFCLYASYALGLWYASWLVKHGISDFSKTIRVFMVLMVSANGAAETLTLAPDFIKGGQAMRSVFELLDRKTEIEPDDPDTTPVPDRLRGEVELKHIDFSYPSRPDIQIFRDLSLRARAGKTLALVGPSGCGKSSVISLIQRFYEPSSGRVMIDGKDIRKYNLKAIRKHIAIVPQEPCLFGTTIYENIAYGHECATEAEIIQAATLASAHKFISALPEGYKTYVGERGVQLSGGQKQRIAIARALVRKAEIMLLDEATSALDAESERSVQEALDQACSGRTSIVVAHRLSTIRNAHVIAVIDDGKVAEQGSHSHLLKNHPDGIYARMIQLQRFTHTQVIGMTSGSSSRVKEDDA.

A run of 2 helical transmembrane segments spans residues 42 to 62 and 93 to 113; these read VLMG…PLFL and FLVV…CWMW. The ABC transmembrane type-1 1 domain maps to 44–333; sequence MGIGSVGAFV…SAPSMAAFAK (290 aa). An ATP-binding site is contributed by Asp139. A run of 2 helical transmembrane segments spans residues 166 to 186 and 187 to 207; these read LGNF…GFTA and VWQL…IGGI. Asn217 carries N-linked (GlcNAc...) asparagine glycosylation. 2 helical membrane passes run 277-297 and 301-321; these read ATYF…GYLV and LTNG…GLAL. Tyr286 is a brassinolide binding site. One can recognise an ABC transporter 1 domain in the interval 368–604; that stretch reads VELKNVDFSY…GENGVYAKLI (237 aa). The ATP site is built by Tyr377, Ser379, Arg380, Gly408, Lys409, Ser410, and Thr411. The interval 614-647 is disordered; the sequence is AMSNARKSSARPSSARNSVSSPIMTRNSSYGRSP. Residues 616-635 show a composition bias toward low complexity; the sequence is SNARKSSARPSSARNSVSSP. N-linked (GlcNAc...) asparagine glycosylation is present at Asn640. In terms of domain architecture, ABC transmembrane type-1 2 spans 700–988; it reads ALLGSVGSVI…TLTLAPDFIK (289 aa). 2 helical membrane-spanning segments follow: residues 705–725 and 745–765; these read VGSV…SAVL and YLLI…HSFW. Asn771 carries N-linked (GlcNAc...) asparagine glycosylation. Asp793 is a binding site for ATP. Asn797 carries an N-linked (GlcNAc...) asparagine glycan. Transmembrane regions (helical) follow at residues 821 to 843, 845 to 867, 932 to 952, and 967 to 987; these read ISVI…VLQW, LALV…KMFM, VAQF…SWLV, and MVLM…PDFI. Positions 941 and 978 each coordinate brassinolide. One can recognise an ABC transporter 2 domain in the interval 1024 to 1260; the sequence is VELKHIDFSY…HPDGIYARMI (237 aa). ATP is bound by residues Tyr1033, Arg1036, Gly1064, Lys1065, and Ser1066. An interaction with FKBP42/TWD1 region spans residues 1049–1286; it reads ARAGKTLALV…SSSRVKEDDA (238 aa).

It belongs to the ABC transporter superfamily. ABCB family. Multidrug resistance exporter (TC 3.A.1.201) subfamily. As to quaternary structure, interacts with 1-naphthylphthalamic acid (NPA) and FKBP42/TWD1. In terms of tissue distribution, ubiquitous, with high levels in peduncles. Mostly localized in young developing tissues, including meristems, as well as root and shoot apices.

The protein localises to the cell membrane. The enzyme catalyses (indol-3-yl)acetate(in) + ATP + H2O = (indol-3-yl)acetate(out) + ADP + phosphate + H(+). It catalyses the reaction brassinolide(in) + ATP + H2O = brassinolide(out) + ADP + phosphate + H(+). It carries out the reaction 24-epi-brassinolide(in) + ATP + H2O = 24-epi-brassinolide(out) + ADP + phosphate + H(+). The catalysed reaction is 24-epi-castasterone(in) + ATP + H2O = 24-epi-castasterone(out) + ADP + phosphate + H(+). The enzyme catalyses castasterone(in) + ATP + H2O = castasterone(out) + ADP + phosphate + H(+). Transport capacity is stimulated by the chaperone protein FKBP42/TWD1. Transport activity inhibited by 1-N-naphthylphthalamic acid (NPA), cyclopropyl propane dione (CPD), cyclosporin A, verapamil and quercetin. ATPase activity is specifically activated by bioactive brassinosteroids in a dose-dependent manner, including brassinolide (BL), 24-epiBL, 24-epicastasterone (24-epiCS) and castasterone-alkyne; BL binding leads to structural changes. Inhibited by vanadate. Brassinosteroid exporter that, in conjunction with ABCB19, supports the accumulation of exogenous brassinosteroids (BR) in the apoplast, thus promoting BR signaling initiation involving the specific receptor BRI1 and required for plant growth and stress responses. Auxin efflux transporter that acts as a negative regulator of light signaling to promote hypocotyl elongation. May contribute to the regulation of leaf position and morphology during PHOT1-mediated blue light responses involving auxin distribution, especially in low light fluence. Together with ABCB19 and in a FKBP42/TWD1-dependent manner, supports seed development by promoting stamen elongation and, to a lesser extent, anther dehiscence and pollen maturation, probably as auxin transporters. Mediates the accumulation of chlorophyll and anthocyanin, as well as the expression of genes in response to light. Participates directly in auxin efflux and thus regulates the polar (presumably basipetal) auxin transport (from root tips to root elongating zone). Also transports some auxin metabolites such as oxindoleacetic acid and indoleacetaldehyde. Involved in diverse auxin-mediated responses including gravitropism, phototropism and lateral root formation. Confers resistance to herbicides such as dicamba, pendimethalin, oryzalin, and monosodium acid methanearsonate (MSMA), but not to herbicides such as glyphosate, atrazine, bentazon and fluazifop-p-butyl. Also mediates resistance to xenobiotics such as cycloheximide and the cytokinin N6-(2-isopentenyl)adenine (2IP). The chain is ABC transporter B family member 1 from Arabidopsis thaliana (Mouse-ear cress).